Here is a 251-residue protein sequence, read N- to C-terminus: MRTGVIAKKMGMTRLFQEDGRHVPVTVLALENVQVVARREQDRDGYVAVQLGAGSAKPKNLTKPERGHFGKAEVEPKAFVAEFRVSEDGLLDVGAEISADHYVAGQFVDIQGSTQGKGFAGGMKRWGFGGLRATHGVSVSHRSLGSTGQRQDPGKVFKNKKMAGHMGDKNRTQQNLEIVQTDAERGLLFVKGSVPGSKGGWLLVKDSVKIAAPKDAPFPAGLKSAANSNSAPTETPAEEVAAPEATEGQEG.

An N5-methylglutamine modification is found at Gln-151. Residues 214 to 251 (KDAPFPAGLKSAANSNSAPTETPAEEVAAPEATEGQEG) form a disordered region. A compositionally biased stretch (low complexity) spans 231–251 (APTETPAEEVAAPEATEGQEG).

It belongs to the universal ribosomal protein uL3 family. As to quaternary structure, part of the 50S ribosomal subunit. Forms a cluster with proteins L14 and L19. In terms of processing, methylated by PrmB.

Its function is as follows. One of the primary rRNA binding proteins, it binds directly near the 3'-end of the 23S rRNA, where it nucleates assembly of the 50S subunit. The sequence is that of Large ribosomal subunit protein uL3 from Rhizorhabdus wittichii (strain DSM 6014 / CCUG 31198 / JCM 15750 / NBRC 105917 / EY 4224 / RW1) (Sphingomonas wittichii).